The primary structure comprises 123 residues: Potassium voltage-gated channel subfamily E member 2 (123 aa).

N-linked (GlcNAc...) asparagine glycans are attached at residues Asn-6 and Asn-29. A helical transmembrane segment spans residues 49–69; sequence VILYLMVMIGMFSFIIVAILV. Residues 70–123 are Cytoplasmic-facing; it reads STVKSKRREHSNDPYHQYIVEDWQEKYKSQILNLEESKATIHENIGAAGFKMSP.

Belongs to the potassium channel KCNE family. In terms of assembly, interacts with KCNB1. Associates with KCNH2/ERG1. May associate with KCNQ2 and KCNQ3. Associates with HCN1 and probably HCN2. Heteromultimer with KCNC2. Interacts with KCNC2. Interacts with KCNQ1; forms a heterooligomer complex that targets to the membrane raft and leading to currents with an apparently instantaneous activation, a rapid deactivation process and a linear current-voltage relationship and decreases the amplitude of the outward current. In terms of tissue distribution, highly expressed in brain, heart, skeletal muscle, pancreas, placenta, kidney, colon and thymus. A small but significant expression is found in liver, ovary, testis, prostate, small intestine and leukocytes. Very low expression, nearly undetectable, in lung and spleen.

Its subcellular location is the cell membrane. The protein localises to the apical cell membrane. In terms of biological role, ancillary protein that functions as a regulatory subunit of the voltage-gated potassium (Kv) channel complex composed of pore-forming and potassium-conducting alpha subunits and of regulatory beta subunits. KCNE2 beta subunit modulates the gating kinetics and enhances stability of the channel complex. Alters the gating of the delayed rectifier Kv channel containing KCNB1 alpha subunit. Associates with KCNH2/HERG alpha subunit Kv channel to form the rapidly activating component of the delayed rectifying potassium current (IKr) in heart. May associate with KCNQ2 and/or KCNQ3 alpha subunits to modulate the native M-type current. May associate with HCN1 and HCN2 channel subunits to increase potassium current. Forms a heterooligomer complex with KCNQ1/KVLQT1 alpha subunits which leads to currents with an apparently instantaneous activation, a rapid deactivation process and a linear current-voltage relationship and decreases the amplitude of the outward current. KCNQ1-KCNE2 channel associates with Na(+)-coupled myo-inositol symporter in the apical membrane of choroid plexus epithelium and regulates the myo-inositol gradient between blood and cerebrospinal fluid with an impact on neuron excitability. This is Potassium voltage-gated channel subfamily E member 2 from Homo sapiens (Human).